A 414-amino-acid polypeptide reads, in one-letter code: WD repeat-containing protein jip5 (414 aa).

WD repeat units lie at residues P9–D48, R73–K112, A118–S159, V222–E263, and D319–D356. Residues R39–I65 are disordered. The interval V357–D414 is disordered. Residues D369–E383 show a composition bias toward acidic residues. Residues R394 to G403 are compositionally biased toward basic residues.

This sequence belongs to the WD repeat WDR55 family.

The protein resides in the nucleus. It localises to the nucleolus. This Aspergillus clavatus (strain ATCC 1007 / CBS 513.65 / DSM 816 / NCTC 3887 / NRRL 1 / QM 1276 / 107) protein is WD repeat-containing protein jip5 (jip5).